The sequence spans 516 residues: Putative fatty acyl-CoA reductase CG8306 (516 aa).

Helical transmembrane passes span 356-376, 471-491, and 496-516; these read WVFRLSAILFHFIPAIILDLV, ILLGLHVALQLSFWYGVFKLI, and GISTAKAALVLPVLYYLFGLL.

The protein belongs to the fatty acyl-CoA reductase family.

It is found in the membrane. It carries out the reaction a long-chain fatty acyl-CoA + 2 NADPH + 2 H(+) = a long-chain primary fatty alcohol + 2 NADP(+) + CoA. Its function is as follows. Catalyzes the reduction of C16 or C18 fatty acyl-CoA to fatty alcohols. This is Putative fatty acyl-CoA reductase CG8306 from Drosophila melanogaster (Fruit fly).